The primary structure comprises 976 residues: Vacuolar membrane protease (976 aa).

At 1-15 the chain is on the cytoplasmic side; the sequence is MKLKSVFRSVLKYRK. The chain crosses the membrane as a helical span at residues 16–36; sequence TNLSLLLLITYSIITLLYIFD. The Vacuolar segment spans residues 37 to 359; the sequence is HERYKLNLPK…KFFVISAKTL (323 aa). N-linked (GlcNAc...) asparagine glycosylation is found at Asn96 and Asn121. 2 residues coordinate Zn(2+): His156 and Asp168. Asn189 carries an N-linked (GlcNAc...) asparagine glycan. Glu200 functions as the Proton acceptor in the catalytic mechanism. Glu201 provides a ligand contact to Zn(2+). Asn212 and Asn217 each carry an N-linked (GlcNAc...) asparagine glycan. Zn(2+)-binding residues include Glu226 and His300. A helical transmembrane segment spans residues 360 to 380; sequence FYWNCIFLLVSPVVAIGLYLI. Residues 381-392 lie on the Cytoplasmic side of the membrane; the sequence is SRDRMTWKSHSW. The helical transmembrane segment at 393–412 threads the bilayer; it reads LSWTRFPLSLAAGIIVQKLF. Residues 413–428 lie on the Vacuolar side of the membrane; that stretch reads SNDIIRSNPLTFSRNY. Residues 429–449 traverse the membrane as a helical segment; it reads FWPISAFFTQVIFTSYVLINC. Topologically, residues 450–461 are cytoplasmic; sequence SNFFFPCADMKS. Residues 462-482 traverse the membrane as a helical segment; that stretch reads LSIIELFIILWTILLFTSKLL. The Vacuolar portion of the chain corresponds to 483-496; the sequence is YSSDYRYTGLYPLS. Residues 497–517 form a helical membrane-spanning segment; that stretch reads IFFLLSTIAAILRLLALALGM. At 518 to 627 the chain is on the cytoplasmic side; it reads RTRKRLGREC…NSLKLEYTDY (110 aa). The tract at residues 528-610 is disordered; sequence RDHHSNYSSH…PLLKGSNSME (83 aa). A compositionally biased stretch (polar residues) spans 549 to 558; it reads NLEQPQDQFT. The span at 559 to 570 shows a compositional bias: low complexity; the sequence is SSQDDQASIQDD. A compositionally biased stretch (basic and acidic residues) spans 582-601; that stretch reads NVDEDHGMDSSSQQHDERVP. The helical transmembrane segment at 628–648 threads the bilayer; the sequence is AWIIQFLLIVPIPSFILFNSV. Residues 649 to 668 are Vacuolar-facing; the sequence is DVIMDALNHTVQEGSKATFD. N-linked (GlcNAc...) asparagine glycosylation occurs at Asn656. Residues 669–689 traverse the membrane as a helical segment; the sequence is VLRFGMVGSILMALPILPFFY. At 690–692 the chain is on the cytoplasmic side; it reads KVN. Residues 693 to 713 traverse the membrane as a helical segment; sequence YITISLTALLFLISASKTLLV. Topologically, residues 714–976 are vacuolar; the sequence is HPFTNSNPLK…LVIVKDAIIL (263 aa). Asn768, Asn796, Asn811, Asn866, and Asn937 each carry an N-linked (GlcNAc...) asparagine glycan.

It belongs to the peptidase M28 family. Zn(2+) is required as a cofactor.

Its subcellular location is the vacuole membrane. Functionally, may be involved in vacuolar sorting and osmoregulation. This is Vacuolar membrane protease from Saccharomyces cerevisiae (strain YJM789) (Baker's yeast).